Reading from the N-terminus, the 130-residue chain is Small ribosomal subunit protein uS8 (130 aa).

It belongs to the universal ribosomal protein uS8 family. In terms of assembly, part of the 30S ribosomal subunit. Contacts proteins S5 and S12.

Functionally, one of the primary rRNA binding proteins, it binds directly to 16S rRNA central domain where it helps coordinate assembly of the platform of the 30S subunit. The chain is Small ribosomal subunit protein uS8 from Aliivibrio fischeri (strain ATCC 700601 / ES114) (Vibrio fischeri).